A 149-amino-acid polypeptide reads, in one-letter code: Transcriptional regulator MraZ (149 aa).

2 consecutive SpoVT-AbrB domains span residues 6–52 (RSHR…PYPD) and 81–124 (AEEM…DQSK).

The protein belongs to the MraZ family. Forms oligomers.

The protein localises to the cytoplasm. Its subcellular location is the nucleoid. This chain is Transcriptional regulator MraZ, found in Nitratidesulfovibrio vulgaris (strain ATCC 29579 / DSM 644 / CCUG 34227 / NCIMB 8303 / VKM B-1760 / Hildenborough) (Desulfovibrio vulgaris).